The primary structure comprises 296 residues: Cyclin-dependent kinase 1 (296 aa).

The region spanning 5–288 (FQKLEKIGEG…AKNGLSHKYF (284 aa)) is the Protein kinase domain. ATP-binding positions include 11 to 19 (IGEGTYGVV) and Lys-34. Asp-130 acts as the Proton acceptor in catalysis.

Belongs to the protein kinase superfamily. CMGC Ser/Thr protein kinase family. CDC2/CDKX subfamily.

It localises to the nucleus. The catalysed reaction is L-seryl-[protein] + ATP = O-phospho-L-seryl-[protein] + ADP + H(+). The enzyme catalyses L-threonyl-[protein] + ATP = O-phospho-L-threonyl-[protein] + ADP + H(+). In terms of biological role, cyclin-dependent kinase that acts as a master regulator of the mitotic and meiotic cell cycles. This Encephalitozoon cuniculi (strain GB-M1) (Microsporidian parasite) protein is Cyclin-dependent kinase 1.